We begin with the raw amino-acid sequence, 270 residues long: Phosphonates import ATP-binding protein PhnC (270 aa).

Residues 2–245 (LVIEGLTCRF…IARELYDLEA (244 aa)) form the ABC transporter domain. An ATP-binding site is contributed by 34 to 41 (GRSGAGKS).

It belongs to the ABC transporter superfamily. Phosphonates importer (TC 3.A.1.9.1) family. As to quaternary structure, the complex is composed of two ATP-binding proteins (PhnC), two transmembrane proteins (PhnE) and a solute-binding protein (PhnD).

It is found in the cell inner membrane. It carries out the reaction phosphonate(out) + ATP + H2O = phosphonate(in) + ADP + phosphate + H(+). Its function is as follows. Part of the ABC transporter complex PhnCDE involved in phosphonates import. Responsible for energy coupling to the transport system. The chain is Phosphonates import ATP-binding protein PhnC from Rhodopseudomonas palustris (strain BisB5).